The following is a 336-amino-acid chain: Cytosolic 5'-nucleotidase 3A (336 aa).

Residue D88 is the Nucleophile of the active site. Residues D88 and D90 each contribute to the Mg(2+) site. The Proton donor role is filled by D90. E135 contributes to the CMP binding site. 2 residues coordinate N(7)-methyl-GMP: E135 and S156. Residues 203–204 (SA) and K252 contribute to the substrate site. D277 serves as a coordination point for Mg(2+). S278 is subject to Phosphoserine.

The protein belongs to the pyrimidine 5'-nucleotidase family. In terms of assembly, monomer. Isoforms 1, 3 and 4 are expressed in reticulocytes. Isoform 4 is hardly detectable in bone marrow and fetal liver.

It localises to the cytoplasm. It is found in the endoplasmic reticulum. The enzyme catalyses N(7)-methyl-GMP + H2O = N(7)-methylguanosine + phosphate. It catalyses the reaction CMP + H2O = cytidine + phosphate. It carries out the reaction a ribonucleoside 5'-phosphate + H2O = a ribonucleoside + phosphate. In terms of biological role, nucleotidase which shows specific activity towards cytidine monophosphate (CMP) and 7-methylguanosine monophosphate (m(7)GMP). CMP seems to be the preferred substrate. The protein is Cytosolic 5'-nucleotidase 3A (NT5C3A) of Homo sapiens (Human).